Consider the following 157-residue polypeptide: Probable succinate transporter subunit YjjB (157 aa).

The next 4 helical transmembrane spans lie at 8–28 (LALA…AMVF), 50–70 (MILM…SMLV), 87–107 (VFTV…TAMI), and 129–149 (FLTA…PGLW).

This sequence belongs to the ThrE exporter (TC 2.A.79) family. As to quaternary structure, the transporter is composed of YjjB and YjjP.

It localises to the cell inner membrane. In terms of biological role, involved in succinate export with YjjP. Both proteins are required for export. The polypeptide is Probable succinate transporter subunit YjjB (Shigella flexneri serotype 5b (strain 8401)).